Reading from the N-terminus, the 111-residue chain is Translation initiation factor 1A 1 (111 aa).

The interval 1-28 is disordered; the sequence is MTLADLKKPTSRASPSTEETVTRVRTPR. The region spanning 22–96 is the S1-like domain; it reads TRVRTPRREN…EKADVIWKYT (75 aa).

The protein belongs to the eIF-1A family.

Functionally, seems to be required for maximal rate of protein biosynthesis. Enhances ribosome dissociation into subunits and stabilizes the binding of the initiator Met-tRNA(I) to 40 S ribosomal subunits. This Methanosarcina mazei (strain ATCC BAA-159 / DSM 3647 / Goe1 / Go1 / JCM 11833 / OCM 88) (Methanosarcina frisia) protein is Translation initiation factor 1A 1 (eIF1A1).